Consider the following 177-residue polypeptide: MNIIQQLEAEQAAKIAAKRTLPEFSPGDTVRVNVRVVEGTRTRVQAYEGVCIARSGGGINESFTVRKISYGEGVERVFPVYSPLVESVDVVRRGKVRRAKLYYLRDRRGKSARIVENTGTRARKLNDAERQAISEEKARIEAEKVAAAQALAAEKAAAEAAEAKAAEEAKAAEAAAE.

The protein belongs to the bacterial ribosomal protein bL19 family.

Its function is as follows. This protein is located at the 30S-50S ribosomal subunit interface and may play a role in the structure and function of the aminoacyl-tRNA binding site. The protein is Large ribosomal subunit protein bL19 of Sinorhizobium medicae (strain WSM419) (Ensifer medicae).